The chain runs to 310 residues: Keratin, type II cytoskeletal 8 (310 aa).

Positions 1–38 (QRTLKVSSSGPRSFSSRSFSSGPSSRISSSSYSRVGSN) are disordered. Lys-5 is covalently cross-linked (Glycyl lysine isopeptide (Lys-Gly) (interchain with G-Cter in SUMO2)). Phosphoserine occurs at positions 7, 9, 15, and 16. A compositionally biased stretch (low complexity) spans 7–38 (SSSGPRSFSSRSFSSGPSSRISSSSYSRVGSN). The residue at position 17 (Arg-17) is an Omega-N-methylarginine. A phosphoserine mark is found at Ser-18, Ser-21, and Ser-25. Arg-26 is modified (omega-N-methylarginine). Phosphoserine is present on residues Ser-28, Ser-31, and Ser-33. Arg-34 is subject to Omega-N-methylarginine. The residue at position 37 (Ser-37) is a Phosphoserine. Arg-42 carries the asymmetric dimethylarginine; alternate modification. Residue Arg-42 is modified to Omega-N-methylarginine; alternate. Residues 92-127 (EKEQIKTLNNKFASFIDKVRFLEQQNKILETKWSFL) form a coil 1A region. The region spanning 92–310 (EKEQIKTLNN…LRHTKTEISE (219 aa)) is the IF rod domain. Lys-102 bears the N6-malonyllysine mark. Glycyl lysine isopeptide (Lys-Gly) (interchain with G-Cter in SUMO2) cross-links involve residues Lys-123 and Lys-131. Residues 128–144 (QQQKTSQSNLDGLFEKY) form a linker 1 region. Residues 145-236 (ITNLRRQLDS…HLYEEEIKEM (92 aa)) are coil 1B. Residue Lys-198 forms a Glycyl lysine isopeptide (Lys-Gly) (interchain with G-Cter in SUMO1); alternate linkage. Lys-198 is covalently cross-linked (Glycyl lysine isopeptide (Lys-Gly) (interchain with G-Cter in SUMO2); alternate). Lys-208 carries the post-translational modification N6-acetyllysine. Phosphotyrosine is present on Tyr-229. Residues 237–260 (QSQISDTSVVVSMDNSRSLDLDGI) are linker 12. 2 positions are modified to phosphoserine: Ser-254 and Ser-275. The interval 261–310 (IADVRAQYEEIANRSRAEAETMYQIKYEELQLLAGKHGDDLRHTKTEISE) is coil 2. Lys-286 is covalently cross-linked (Glycyl lysine isopeptide (Lys-Gly) (interchain with G-Cter in SUMO2)). Lys-296 is covalently cross-linked (Glycyl lysine isopeptide (Lys-Gly) (interchain with G-Cter in SUMO2); alternate). Lys-296 bears the N6-acetyllysine; alternate mark. Lys-305 is covalently cross-linked (Glycyl lysine isopeptide (Lys-Gly) (interchain with G-Cter in SUMO2)).

This sequence belongs to the intermediate filament family. As to quaternary structure, heterotetramer of two type I and two type II keratins. Forms a heterodimer with KRT18. Associates with KRT20. Interacts with PNN. When associated with KRT19, interacts with DMD. Interacts with APEX1. Interacts with GPER1. Interacts with EPPK1. Interacts with PKP1 and PKP2. Post-translationally, O-glycosylated. O-GlcNAcylation at multiple sites increases solubility, and decreases stability by inducing proteasomal degradation. In terms of processing, O-glycosylated (O-GlcNAcylated), in a cell cycle-dependent manner.

It localises to the cytoplasm. The protein localises to the nucleus. Its subcellular location is the nucleoplasm. It is found in the nucleus matrix. In terms of biological role, together with KRT19, helps to link the contractile apparatus to dystrophin at the costameres of striated muscle. The protein is Keratin, type II cytoskeletal 8 of Potorous tridactylus (Potoroo).